The following is a 398-amino-acid chain: MSQENWIDLEKKYHLQIYGRLPVVLVEGKGMEVYDIDGKKYLDFLAGIGVNNVGHCHPKVVEAIKKQAETLIHTSNIYYTIPQIKLAKKLVELSGLDRAFFCNSGAEANEGAIKFARKYVSKVLGREGGEIISMYNAFHGRTLTTLAATPKPKYQDGFYPLPPGFKYVPFNDIEALKEAITDKTAAIMIEPVQGEGGIHVADKDYLKAVRDLCDDKNIVLIFDEVQCGMGRTGRMFAFEHYGVEPDILTLAKALGGGVPIGAVVLKEEIAKALSYGDHGTTFGGNPLACSAALASVEVIEELIKDDKVIEKGKYFIRKLENLIEKYNFIKEVRGLGLMIGAELEFNGADIVKKMLEKGFLINCTSDTVLRFLPPLIVEKEHIDALINALDEVFTEIKK.

Pyridoxal 5'-phosphate contacts are provided by residues glycine 105–alanine 106 and phenylalanine 138. Position 141 (arginine 141) interacts with N(2)-acetyl-L-ornithine. Position 223–226 (aspartate 223–glutamine 226) interacts with pyridoxal 5'-phosphate. Lysine 252 is modified (N6-(pyridoxal phosphate)lysine). Threonine 280 provides a ligand contact to N(2)-acetyl-L-ornithine. Residue threonine 281 coordinates pyridoxal 5'-phosphate.

Belongs to the class-III pyridoxal-phosphate-dependent aminotransferase family. ArgD subfamily. In terms of assembly, homodimer. Requires pyridoxal 5'-phosphate as cofactor.

It localises to the cytoplasm. It catalyses the reaction N(2)-acetyl-L-ornithine + 2-oxoglutarate = N-acetyl-L-glutamate 5-semialdehyde + L-glutamate. The protein operates within amino-acid biosynthesis; L-arginine biosynthesis; N(2)-acetyl-L-ornithine from L-glutamate: step 4/4. The sequence is that of Acetylornithine aminotransferase from Methanocaldococcus jannaschii (strain ATCC 43067 / DSM 2661 / JAL-1 / JCM 10045 / NBRC 100440) (Methanococcus jannaschii).